The sequence spans 868 residues: Leucine-rich repeat receptor-like serine/threonine-protein kinase At2g14510 (868 aa).

An N-terminal signal peptide occupies residues 1–23; that stretch reads METRNKFMLLACATFSIMSLVKS. The Extracellular segment spans residues 24–510; sequence QNQQGFISLD…KHQPKSWLVA (487 aa). Asn-48, Asn-68, Asn-231, Asn-235, Asn-258, Asn-291, Asn-433, and Asn-446 each carry an N-linked (GlcNAc...) asparagine glycan. 3 LRR repeats span residues 412-435, 436-458, and 460-482; these read RIIS…QNLT, MLRE…LATI, and PLLV…LQDR. An N-linked (GlcNAc...) asparagine glycan is attached at Asn-495. The chain crosses the membrane as a helical span at residues 511-531; that stretch reads IVASISCVAVTIIVLVLIFIF. Over 532-868 the chain is Cytoplasmic; that stretch reads RRRKSSTRKV…TFISDIPSAR (337 aa). Residues 563–832 form the Protein kinase domain; that stretch reads NNFEVVLGKG…NMTRVAHELN (270 aa). ATP-binding positions include 569-577 and Lys-590; that span reads LGKGGFGVV. Phosphotyrosine is present on Tyr-635. The active-site Proton acceptor is the Asp-687. Phosphoserine is present on Ser-721. Phosphothreonine is present on residues Thr-722 and Thr-727. The residue at position 735 (Tyr-735) is a Phosphotyrosine.

It belongs to the protein kinase superfamily. Ser/Thr protein kinase family.

The protein resides in the cell membrane. It carries out the reaction L-seryl-[protein] + ATP = O-phospho-L-seryl-[protein] + ADP + H(+). The enzyme catalyses L-threonyl-[protein] + ATP = O-phospho-L-threonyl-[protein] + ADP + H(+). The chain is Leucine-rich repeat receptor-like serine/threonine-protein kinase At2g14510 from Arabidopsis thaliana (Mouse-ear cress).